We begin with the raw amino-acid sequence, 498 residues long: ATP synthase subunit beta, chloroplastic (498 aa).

172-179 is an ATP binding site; that stretch reads GGAGVGKT.

It belongs to the ATPase alpha/beta chains family. As to quaternary structure, F-type ATPases have 2 components, CF(1) - the catalytic core - and CF(0) - the membrane proton channel. CF(1) has five subunits: alpha(3), beta(3), gamma(1), delta(1), epsilon(1). CF(0) has four main subunits: a(1), b(1), b'(1) and c(9-12).

It localises to the plastid. It is found in the chloroplast thylakoid membrane. It catalyses the reaction ATP + H2O + 4 H(+)(in) = ADP + phosphate + 5 H(+)(out). Functionally, produces ATP from ADP in the presence of a proton gradient across the membrane. The catalytic sites are hosted primarily by the beta subunits. This Schisandra sphenanthera (Southern magnolia vine) protein is ATP synthase subunit beta, chloroplastic.